A 107-amino-acid chain; its full sequence is SH3 domain-binding glutamic acid-rich-like protein 2 (107 aa).

An SH3-binding motif is present at residues 61–67 (QGNPLPP).

This sequence belongs to the SH3BGR family.

It localises to the nucleus. This is SH3 domain-binding glutamic acid-rich-like protein 2 (Sh3bgrl2) from Mus musculus (Mouse).